The chain runs to 226 residues: Lipoprotein-releasing system ATP-binding protein LolD (226 aa).

The region spanning L6 to V226 is the ABC transporter domain. G42–S49 contributes to the ATP binding site.

Belongs to the ABC transporter superfamily. Lipoprotein translocase (TC 3.A.1.125) family. In terms of assembly, the complex is composed of two ATP-binding proteins (LolD) and two transmembrane proteins (LolC and LolE).

The protein localises to the cell inner membrane. Functionally, part of the ABC transporter complex LolCDE involved in the translocation of mature outer membrane-directed lipoproteins, from the inner membrane to the periplasmic chaperone, LolA. Responsible for the formation of the LolA-lipoprotein complex in an ATP-dependent manner. This Paramagnetospirillum magneticum (strain ATCC 700264 / AMB-1) (Magnetospirillum magneticum) protein is Lipoprotein-releasing system ATP-binding protein LolD.